The sequence spans 327 residues: Methionyl-tRNA formyltransferase (327 aa).

Residue Ser121–Pro124 participates in (6S)-5,6,7,8-tetrahydrofolate binding.

The protein belongs to the Fmt family.

The catalysed reaction is L-methionyl-tRNA(fMet) + (6R)-10-formyltetrahydrofolate = N-formyl-L-methionyl-tRNA(fMet) + (6S)-5,6,7,8-tetrahydrofolate + H(+). Attaches a formyl group to the free amino group of methionyl-tRNA(fMet). The formyl group appears to play a dual role in the initiator identity of N-formylmethionyl-tRNA by promoting its recognition by IF2 and preventing the misappropriation of this tRNA by the elongation apparatus. The sequence is that of Methionyl-tRNA formyltransferase from Paraburkholderia phymatum (strain DSM 17167 / CIP 108236 / LMG 21445 / STM815) (Burkholderia phymatum).